A 330-amino-acid chain; its full sequence is Lactamase-like protein nscB (330 aa).

Zn(2+)-binding residues include His-97, His-99, Asp-101, and His-102. Asp-101 (proton donor/acceptor) is an active-site residue.

This sequence belongs to the metallo-beta-lactamase superfamily. It depends on Zn(2+) as a cofactor.

It participates in secondary metabolite biosynthesis. Its function is as follows. Lactamase-like protein; part of the gene cluster that mediates the biosynthesis of neosartoricin, a prenylated anthracenone that exhibits T-cell antiproliferative activity, suggestive of a physiological role as an immunosuppressive agent. The non-reducing polyketide synthase nscA probably synthesizes and cyclizes the decaketide backbone. The hydrolase nscB then mediates the product release through hydrolysis followed by spontaneous decarboxylation. The prenyltransferase nscD catalyzes the addition of the dimethylallyl group to the aromatic C5. The FAD-dependent monooxygenase nscC is then responsible for the stereospecific hydroxylation at C2. There is no gene encoding O-acetyltransferase in the nsc gene cluster; thus, the last step of 2-O-acetylation leading to neosartoricin may be catalyzed by an unidentified O-acetyltransferase. The protein is Lactamase-like protein nscB of Aspergillus fumigatus (strain ATCC MYA-4609 / CBS 101355 / FGSC A1100 / Af293) (Neosartorya fumigata).